Consider the following 142-residue polypeptide: Cytochrome c-type biogenesis protein CcmE (142 aa).

Over 1–2 (MK) the chain is Cytoplasmic. Residues 3 to 23 (GKYLLGILVILGALGYMVFGG) traverse the membrane as a helical; Signal-anchor for type II membrane protein segment. Residues 24–142 (LGRNLVYFLT…EVRKLIEEAQ (119 aa)) are Periplasmic-facing. Heme-binding residues include histidine 118 and tyrosine 122.

This sequence belongs to the CcmE/CycJ family.

The protein resides in the cell inner membrane. Its function is as follows. Heme chaperone required for the biogenesis of c-type cytochromes. Transiently binds heme delivered by CcmC and transfers the heme to apo-cytochromes in a process facilitated by CcmF and CcmH. This is Cytochrome c-type biogenesis protein CcmE from Thermus thermophilus (strain ATCC 27634 / DSM 579 / HB8).